We begin with the raw amino-acid sequence, 70 residues long: Conotoxin elongated-tx3a-a (70 aa).

A signal peptide spans Met-1–Ala-24. Positions Asp-25–Arg-44 are excised as a propeptide. Intrachain disulfides connect Cys-55-Cys-68, Cys-56-Cys-66, and Cys-61-Cys-69. At Trp-58 the chain carries 6'-bromotryptophan; partial. Cys-69 carries the post-translational modification Cysteine amide; partial.

It belongs to the conotoxin M superfamily. In terms of processing, two short peptides are produced from this precursor; Conotoxin tx3a-b is amidated at Cys-69 (but has no bromotryptophan), whereas conotoxin tx3a-a has an unmodified Gly-70 and a bromotryptophan. Two elongated peptides are also produced; Conotoxin elongated-tx3a-b is amidated at Cys-69 (but has no bromotryptophan), whereas conotoxin elongated tx3a-a has an unmodified Gly-70 (but has no bromotryptophan). Post-translationally, ju et al. (2022) describe a disulfide connectivity (C55-C61; C56-C69; C66-C68) that differs from that of Han and colleagues (2006), McDougal et al. (2008), and Ueberheide et al. (2009). In terms of tissue distribution, expressed by the venom duct. Is present in all duct parts with a highest content in part 2 (proximal of the venom bulb) and then decreases in concentration toward the end of the duct.

The protein resides in the secreted. In terms of biological role, intracranial injection into mice causes scratching and hyperactivity. In vitro, inhibits proliferation of the mice ovarian cancer cells ID8. This is Conotoxin elongated-tx3a-a from Conus textile (Cloth-of-gold cone).